The following is a 272-amino-acid chain: NAD kinase (272 aa).

Aspartate 50 functions as the Proton acceptor in the catalytic mechanism. Residues 50-51 (DG), 126-127 (NE), arginine 152, aspartate 154, 165-170 (TAYNKS), and alanine 189 each bind NAD(+).

It belongs to the NAD kinase family. It depends on a divalent metal cation as a cofactor.

The protein resides in the cytoplasm. It carries out the reaction NAD(+) + ATP = ADP + NADP(+) + H(+). Functionally, involved in the regulation of the intracellular balance of NAD and NADP, and is a key enzyme in the biosynthesis of NADP. Catalyzes specifically the phosphorylation on 2'-hydroxyl of the adenosine moiety of NAD to yield NADP. In Streptococcus pneumoniae (strain Hungary19A-6), this protein is NAD kinase.